The following is a 755-amino-acid chain: Ribosome biogenesis protein BOP1 (755 aa).

2 stretches are compositionally biased toward polar residues: residues 1–10 and 43–61; these read MSQEPSSSFS and ELSS…TEPN. Residues 1–65 are disordered; it reads MSQEPSSSFS…PLTEPNNIPI (65 aa). The interaction with EB1 stretch occupies residues 309-754; sequence MDSMLPTLPN…SGTDGVLRLF (446 aa). The stretch at 335–374 is one WD 1 repeat; sequence TGTRRINGLTFSPKGMFFAVGGRDCILRVFETYSGRQVRA. The disordered stretch occupies residues 482 to 505; the sequence is YNEGSEDDDAAESARFNEERHQRG. The segment covering 496–505 has biased composition (basic and acidic residues); sequence RFNEERHQRG. WD repeat units follow at residues 617-655, 659-698, and 725-755; these read PGVK…EPTA, YHTS…LVKM, and DGSV…RLFK.

Belongs to the WD repeat BOP1/ERB1 family. As to quaternary structure, interacts (via C-terminal WD repeats) with giardin subunit beta. Interacts (via C-terminal WD repeats) with EB1.

The protein resides in the nucleus. Its subcellular location is the nucleolus. The protein localises to the nucleus membrane. Required for maturation of ribosomal RNAs and formation of the large ribosomal subunit. This is Ribosome biogenesis protein BOP1 from Giardia intestinalis (Giardia lamblia).